The following is a 691-amino-acid chain: DNA ligase (691 aa).

NAD(+) contacts are provided by residues 41-45 (DAEYD), 90-91 (SL), and E130. Catalysis depends on K132, which acts as the N6-AMP-lysine intermediate. Residues R153, E190, K307, and K331 each coordinate NAD(+). Zn(2+) contacts are provided by C425, C428, C443, and C449. The 82-residue stretch at 610-691 (APQGVLAGKT…LHQLLEGNTP (82 aa)) folds into the BRCT domain.

Belongs to the NAD-dependent DNA ligase family. LigA subfamily. Mg(2+) is required as a cofactor. The cofactor is Mn(2+).

The catalysed reaction is NAD(+) + (deoxyribonucleotide)n-3'-hydroxyl + 5'-phospho-(deoxyribonucleotide)m = (deoxyribonucleotide)n+m + AMP + beta-nicotinamide D-nucleotide.. DNA ligase that catalyzes the formation of phosphodiester linkages between 5'-phosphoryl and 3'-hydroxyl groups in double-stranded DNA using NAD as a coenzyme and as the energy source for the reaction. It is essential for DNA replication and repair of damaged DNA. This chain is DNA ligase, found in Burkholderia ambifaria (strain ATCC BAA-244 / DSM 16087 / CCUG 44356 / LMG 19182 / AMMD) (Burkholderia cepacia (strain AMMD)).